The primary structure comprises 360 residues: Viral protein TPX (360 aa).

Positions 269-289 (TVTPISSPSPTPTPTPTPTPT) are disordered. One copy of the Thr-Pro(N) repeat lies at 270–291 (VTPISSPSPTPTPTPTPTPTPT). Pro residues predominate over residues 275-289 (SPSPTPTPTPTPTPT). Positions 278–353 (PTPTPTPTPT…PTPTPTPTPT (76 aa)) are 3 Thr-Pro repeats regions and two near identical repeats. Residues 292 to 301 (YDITYVVFDV) constitute a repeat. The stretch at 302-322 (TPSPTPTPTLTSTPTPTPTPT) is one Thr-Pro(N) repeat. A repeat spans 323–332 (YDITYVIFDV). Residues 332–360 (VTPSPTPTPTPTPTPTPTPTPTSTTSSNI) are disordered. One copy of the Thr-Pro(N) repeat lies at 333-353 (TPSPTPTPTPTPTPTPTPTPT). The segment covering 335–351 (SPTPTPTPTPTPTPTPT) has biased composition (pro residues).

This chain is Viral protein TPX, found in Thermoproteus tenax (TTV1).